A 375-amino-acid chain; its full sequence is uncharacterized protein (375 aa).

The next 7 membrane-spanning stretches (helical) occupy residues 21–41 (LLLL…IVLF), 66–86 (IIVF…FCVS), 160–180 (LVGV…PGIV), 203–223 (LVGL…HLLI), 234–254 (FYMV…FHLF), 289–309 (VISF…YFLI), and 338–358 (FFLM…MLFF).

It localises to the cell membrane. This is an uncharacterized protein from Mycoplasma genitalium (strain ATCC 33530 / DSM 19775 / NCTC 10195 / G37) (Mycoplasmoides genitalium).